Consider the following 201-residue polypeptide: Adenylyl-sulfate kinase (201 aa).

A disordered region spans residues 1–23 (MALHDENVVWHSHPVTPQQREQH). Residue 35 to 42 (GLSGSGKS) coordinates ATP. The active-site Phosphoserine intermediate is Ser109.

It belongs to the APS kinase family.

It catalyses the reaction adenosine 5'-phosphosulfate + ATP = 3'-phosphoadenylyl sulfate + ADP + H(+). It functions in the pathway sulfur metabolism; hydrogen sulfide biosynthesis; sulfite from sulfate: step 2/3. In terms of biological role, catalyzes the synthesis of activated sulfate. The sequence is that of Adenylyl-sulfate kinase from Escherichia coli O127:H6 (strain E2348/69 / EPEC).